We begin with the raw amino-acid sequence, 245 residues long: rRNA adenine N-6-methyltransferase (245 aa).

6 residues coordinate S-adenosyl-L-methionine: N10, L12, G37, E58, D83, and S100.

It belongs to the class I-like SAM-binding methyltransferase superfamily. rRNA adenine N(6)-methyltransferase family.

The enzyme catalyses adenosine(2085) in 23S rRNA + 2 S-adenosyl-L-methionine = N(6)-dimethyladenosine(2085) in 23S rRNA + 2 S-adenosyl-L-homocysteine + 2 H(+). In terms of biological role, this protein produces a dimethylation of the adenine residue at position 2085 in 23S rRNA, resulting in reduced affinity between ribosomes and macrolide-lincosamide-streptogramin B antibiotics. The sequence is that of rRNA adenine N-6-methyltransferase from Streptococcus sanguinis.